Consider the following 223-residue polypeptide: Putative oxidoreductase MT1904 (223 aa).

4-28 (LVTGGDTDLGRTMAEGFRNDGHKVT) serves as a coordination point for NADP(+). A substrate-binding site is contributed by serine 128.

Belongs to the short-chain dehydrogenases/reductases (SDR) family.

The chain is Putative oxidoreductase MT1904 from Mycobacterium tuberculosis (strain CDC 1551 / Oshkosh).